Reading from the N-terminus, the 201-residue chain is uncharacterized protein (201 aa).

Positions 1-28 are cleaved as a signal peptide; sequence MMTFKNLRYGLSSSVVLAASLFSVLSYA.

Belongs to the fimbrial protein family.

It is found in the fimbrium. Part of the yadCKLM-htrE-yadVN fimbrial operon. Could contribute to adhesion to various surfaces in specific environmental niches. This is an uncharacterized protein from Escherichia coli (strain K12).